The primary structure comprises 360 residues: A-type ATP synthase subunit C (360 aa).

This sequence belongs to the V-ATPase V0D/AC39 subunit family. In terms of assembly, has multiple subunits, A(3), B(3), C, D, E, F, G, I and K(x); there may be a few other subunits as well.

It is found in the cell membrane. Component of the A-type ATP synthase that produces ATP from ADP in the presence of a proton gradient across the membrane. This is A-type ATP synthase subunit C from Methanosarcina mazei (strain ATCC BAA-159 / DSM 3647 / Goe1 / Go1 / JCM 11833 / OCM 88) (Methanosarcina frisia).